A 92-amino-acid chain; its full sequence is Large ribosomal subunit protein bL31 (92 aa).

It belongs to the bacterial ribosomal protein bL31 family. Type A subfamily. In terms of assembly, part of the 50S ribosomal subunit.

Its function is as follows. Binds the 23S rRNA. The sequence is that of Large ribosomal subunit protein bL31 from Mesoplasma florum (strain ATCC 33453 / NBRC 100688 / NCTC 11704 / L1) (Acholeplasma florum).